The chain runs to 213 residues: Pyridoxine/pyridoxamine 5'-phosphate oxidase (213 aa).

Substrate-binding positions include 9 to 12 and lysine 67; that span reads RLEY. FMN is bound by residues 62-67, 77-78, arginine 83, lysine 84, and glutamine 106; these read RIVLLK and YT. Residues tyrosine 124, arginine 128, and serine 132 each contribute to the substrate site. FMN is bound by residues 141–142 and tryptophan 185; that span reads QS. 191–193 provides a ligand contact to substrate; it reads RLH. Arginine 195 provides a ligand contact to FMN.

The protein belongs to the pyridoxamine 5'-phosphate oxidase family. Homodimer. FMN is required as a cofactor.

It catalyses the reaction pyridoxamine 5'-phosphate + O2 + H2O = pyridoxal 5'-phosphate + H2O2 + NH4(+). It carries out the reaction pyridoxine 5'-phosphate + O2 = pyridoxal 5'-phosphate + H2O2. Its pathway is cofactor metabolism; pyridoxal 5'-phosphate salvage; pyridoxal 5'-phosphate from pyridoxamine 5'-phosphate: step 1/1. It functions in the pathway cofactor metabolism; pyridoxal 5'-phosphate salvage; pyridoxal 5'-phosphate from pyridoxine 5'-phosphate: step 1/1. Functionally, catalyzes the oxidation of either pyridoxine 5'-phosphate (PNP) or pyridoxamine 5'-phosphate (PMP) into pyridoxal 5'-phosphate (PLP). This Chromobacterium violaceum (strain ATCC 12472 / DSM 30191 / JCM 1249 / CCUG 213 / NBRC 12614 / NCIMB 9131 / NCTC 9757 / MK) protein is Pyridoxine/pyridoxamine 5'-phosphate oxidase.